The primary structure comprises 455 residues: Gastric inhibitory polypeptide receptor (455 aa).

The signal sequence occupies residues M1–Q18. Residues R19 to Q135 lie on the Extracellular side of the membrane. 3 disulfides stabilise this stretch: C43–C67, C58–C100, and C81–C115. 3 N-linked (GlcNAc...) asparagine glycosylation sites follow: N59, N69, and N74. A helical membrane pass occupies residues V136–L158. Over F159 to R166 the chain is Cytoplasmic. The helical transmembrane segment at N167–T186 threads the bilayer. The Extracellular segment spans residues R187–R214. A helical transmembrane segment spans residues T215–H239. Over H240–G251 the chain is Cytoplasmic. The chain crosses the membrane as a helical span at residues H252–R275. The Extracellular segment spans residues Y276–K290. A helical transmembrane segment spans residues A291–G316. Residues I317–R338 lie on the Cytoplasmic side of the membrane. The chain crosses the membrane as a helical span at residues S339–E359. Residues E360 to E374 are Extracellular-facing. Residues I375–E395 traverse the membrane as a helical segment. Residues V396 to C455 are Cytoplasmic-facing.

The protein belongs to the G-protein coupled receptor 2 family. As to quaternary structure, may form homodimers and heterodimers with GLP1R. In terms of processing, N-glycosylation is required for cell surface expression and lengthens receptor half-life by preventing degradation in the ER. As to expression, present in the pancreas as well as the gut, adipose tissue, heart, pituitary, and inner layers of the adrenal cortex, whereas it is not found in kidney, spleen, or liver. It is also expressed in several brain regions, including the cerebral cortex, hippocampus, and olfactory bulb.

It localises to the cell membrane. This is a receptor for GIP. The activity of this receptor is mediated by G proteins which activate adenylyl cyclase. This Rattus norvegicus (Rat) protein is Gastric inhibitory polypeptide receptor (Gipr).